We begin with the raw amino-acid sequence, 357 residues long: Peptide chain release factor 1 (357 aa).

Q232 bears the N5-methylglutamine mark.

The protein belongs to the prokaryotic/mitochondrial release factor family. In terms of processing, methylated by PrmC. Methylation increases the termination efficiency of RF1.

Its subcellular location is the cytoplasm. Peptide chain release factor 1 directs the termination of translation in response to the peptide chain termination codons UAG and UAA. The chain is Peptide chain release factor 1 from Oleidesulfovibrio alaskensis (strain ATCC BAA-1058 / DSM 17464 / G20) (Desulfovibrio alaskensis).